Here is a 589-residue protein sequence, read N- to C-terminus: Intermediate filament protein ifb-1 (589 aa).

A disordered region spans residues 1 to 42 (MSSHKESSEYEMQYRSTIQPRTAVRSQSRQSGNYVSGGNGAG). A head region spans residues 8-84 (SEYEMQYRST…LEATDKEKKT (77 aa)). Over residues 14–30 (YRSTIQPRTAVRSQSRQ) the composition is skewed to polar residues. The 353-residue stretch at 81 to 433 (EKKTLQGLND…KMLEGEETRV (353 aa)) folds into the IF rod domain. Residues 85–116 (LQGLNDRLGNYIDRVKKLEEQNRKLVADLDEL) are coil 1A. Positions 117-130 (RGKWGKDTSEIKIK) are linker 1. The tract at residues 131–268 (YSESLSTARK…RVHEQEVKEL (138 aa)) is coil 1B. Positions 269–285 (QALLAQAPADTREFFKN) are linker 12. The coil 2 stretch occupies residues 286 to 433 (ELALAIRDIK…KMLEGEETRV (148 aa)). Residues 434–588 (GLTQMVEQAV…THTQKTIQSG (155 aa)) form a tail region. Positions 444 to 470 (KTHSLQQQENTDSTRSVRGEVSTKTTF) are disordered. One can recognise an LTD domain in the interval 466-584 (TKTTFQRSAK…EERATHTQKT (119 aa)).

Belongs to the intermediate filament family. As to quaternary structure, forms some heteromeric filaments with ifa-1, ifa-2, ifa-3 and probably ifa-4. Expressed in epidermal cells. Expressed in amphid sensory neurons, the excretory cells, the vulva, the uterus, the rectum and some neurons of the tail. Isoform a and isoform b display a similar pattern of expression. Isoform a is predominant in pharyngeal tonofilaments.

Its subcellular location is the cytoplasm. Cytoplasmic intermediate filaments provide mechanical strength to cells. Essential protein, involved in attachment structures in epidermal cells that connect muscles to the external cuticle. Required in morphogenesis and epidermal integrity. Probable component of embryonic epidermal attachment structures. Functions in larval muscle attachment independently of ifa-2. This Caenorhabditis elegans protein is Intermediate filament protein ifb-1 (ifb-1).